We begin with the raw amino-acid sequence, 570 residues long: Sulfite reductase [NADPH] hemoprotein beta-component (570 aa).

Cysteine 434, cysteine 440, cysteine 479, and cysteine 483 together coordinate [4Fe-4S] cluster. Cysteine 483 is a binding site for siroheme.

Belongs to the nitrite and sulfite reductase 4Fe-4S domain family. As to quaternary structure, alpha(8)-beta(8). The alpha component is a flavoprotein, the beta component is a hemoprotein. Siroheme is required as a cofactor. The cofactor is [4Fe-4S] cluster.

It catalyses the reaction hydrogen sulfide + 3 NADP(+) + 3 H2O = sulfite + 3 NADPH + 4 H(+). It functions in the pathway sulfur metabolism; hydrogen sulfide biosynthesis; hydrogen sulfide from sulfite (NADPH route): step 1/1. In terms of biological role, component of the sulfite reductase complex that catalyzes the 6-electron reduction of sulfite to sulfide. This is one of several activities required for the biosynthesis of L-cysteine from sulfate. This is Sulfite reductase [NADPH] hemoprotein beta-component from Salmonella paratyphi A (strain ATCC 9150 / SARB42).